A 298-amino-acid chain; its full sequence is UDP-3-O-acyl-N-acetylglucosamine deacetylase (298 aa).

The Zn(2+) site is built by His-75, His-232, and Asp-236. His-259 serves as the catalytic Proton donor.

This sequence belongs to the LpxC family. The cofactor is Zn(2+).

The enzyme catalyses a UDP-3-O-[(3R)-3-hydroxyacyl]-N-acetyl-alpha-D-glucosamine + H2O = a UDP-3-O-[(3R)-3-hydroxyacyl]-alpha-D-glucosamine + acetate. Its pathway is glycolipid biosynthesis; lipid IV(A) biosynthesis; lipid IV(A) from (3R)-3-hydroxytetradecanoyl-[acyl-carrier-protein] and UDP-N-acetyl-alpha-D-glucosamine: step 2/6. Catalyzes the hydrolysis of UDP-3-O-myristoyl-N-acetylglucosamine to form UDP-3-O-myristoylglucosamine and acetate, the committed step in lipid A biosynthesis. The sequence is that of UDP-3-O-acyl-N-acetylglucosamine deacetylase from Nitratiruptor sp. (strain SB155-2).